Reading from the N-terminus, the 143-residue chain is uncharacterized protein (143 aa).

Residues 1 to 24 (MKKMLMLAFTFLLALTIHVGEASA) form the signal peptide.

This is an uncharacterized protein from Bacillus subtilis (strain 168).